Here is a 476-residue protein sequence, read N- to C-terminus: MSYAQTRTQTKAGYKAGVQDYRLTYYTPDYTPKDTDILAAFRVTPQPGVPYEEAAAAVAAESSTGTWTTVWTDLLTDLDRYKGRCYDIEPVPGEDNQFIAYIAYPLDLFEEGSVTNLLTSLVGNVFGFKALKALRLEDLRIPVAYLKTFQGPPHGIQVERDKINKYGRPLLGCTIKPKLGLSAKNYGRAVYECLRGGLDFTKDDENINSQPFQRWRDRFLFVADAIHKAQAETGEVKGHYLNVTAGTCEEMMKRAAFAKELEMPIIMHDFLTGGFTANTSLAHYCRDNGLLLHIHRAMHAVIDRQKNHGIHFRVLSKCLRMSGGDHIHTGTVVGKLEGDKDITLGFIDLLRENYIEENRSRGIYFTQDWASMPGVMAVASGGIHVWHMPALVDIFGDDAVLQFGGGTLGHPWGNAPGATANRVALEACVQARNEGRNLMREGGDIIREACRWSPELAAACELWKEIKFEFEAVDTV.

2 residues coordinate substrate: Asn-124 and Thr-174. Lys-176 serves as the catalytic Proton acceptor. Lys-178 contacts substrate. Mg(2+)-binding residues include Lys-202, Asp-204, and Glu-205. Residue Lys-202 is modified to N6-carboxylysine. Catalysis depends on His-295, which acts as the Proton acceptor. Substrate is bound by residues Arg-296, His-328, and Ser-380.

Belongs to the RuBisCO large chain family. Type I subfamily. As to quaternary structure, heterohexadecamer of 8 large chains and 8 small chains; disulfide-linked. The disulfide link is formed within the large subunit homodimers. Mg(2+) serves as cofactor. The disulfide bond which can form in the large chain dimeric partners within the hexadecamer appears to be associated with oxidative stress and protein turnover.

It is found in the carboxysome. The enzyme catalyses 2 (2R)-3-phosphoglycerate + 2 H(+) = D-ribulose 1,5-bisphosphate + CO2 + H2O. It carries out the reaction D-ribulose 1,5-bisphosphate + O2 = 2-phosphoglycolate + (2R)-3-phosphoglycerate + 2 H(+). Functionally, ruBisCO catalyzes two reactions: the carboxylation of D-ribulose 1,5-bisphosphate, the primary event in carbon dioxide fixation, as well as the oxidative fragmentation of the pentose substrate in the photorespiration process. Both reactions occur simultaneously and in competition at the same active site. This is Ribulose bisphosphate carboxylase large chain from Cyanothece sp. (strain PCC 7425 / ATCC 29141).